Consider the following 274-residue polypeptide: MTAPAADDRIDEIERAITKSRRYQTVAPATVRRLARAALVAARGDVPDAVKRTKRGLHEIYGAFLPPSPPNYAALLRHLDSAVDAGDDEAVRAALLRAMSVHISTRERLPHLDEFYRELFRHLPRPNTLRDLACGLNPLAAPWMGLPAETVYIASDIDARLVGFVDEALTRLNVPHRTNVADLLEDRLDEPADVTLLLKTLPCLETQQRGSGWEVIDIVNSPNIVVTFPTKSLGQRSKGMFQNYSQSFESQARERSCRIQRLEIGNELIYVIQK.

S-adenosyl-L-methionine is bound by residues 102-108 (HISTRER), Ala133, Asp156, 182-183 (DL), Leu198, and Gln207.

It belongs to the methyltransferase superfamily. Aminoglycoside resistance family.

It carries out the reaction guanosine(1405) in 16S rRNA + S-adenosyl-L-methionine = N(7)-methylguanosine(1405) in 16S rRNA + S-adenosyl-L-homocysteine. Functionally, specifically methylates the N(7) position of guanine 1405 in 16S rRNA. Confers resistance to various aminoglycosides, including gentamicin, kanamycin and sisomicin. In Micromonospora zionensis, this protein is 16S rRNA (guanine(1405)-N(7))-methyltransferase (sgm).